We begin with the raw amino-acid sequence, 115 residues long: MVAAKKTKKSLESINSRLQLVMKSGKYVLGYKQTLKMIRQGKAKLVILANNCPALRKSEIEYYAMLAKTGVHHYSGNNIELGTACGKYYRVCTLAIIDPGDSDIIRSMPEQTGEK.

2 positions are modified to phosphoserine: Ser10 and Ser16. Lys26 carries the N6-acetyllysine; alternate modification. A Glycyl lysine isopeptide (Lys-Gly) (interchain with G-Cter in SUMO2); alternate cross-link involves residue Lys26.

Belongs to the eukaryotic ribosomal protein eL30 family. As to quaternary structure, component of the large ribosomal subunit.

It localises to the cytoplasm. Functionally, component of the large ribosomal subunit. The ribosome is a large ribonucleoprotein complex responsible for the synthesis of proteins in the cell. The polypeptide is Large ribosomal subunit protein eL30 (RPL30) (Homo sapiens (Human)).